Reading from the N-terminus, the 220-residue chain is Large ribosomal subunit protein uL3 (220 aa).

The tract at residues 61–81 (KGSKSNKYANKPAEGHAKKAD) is disordered.

It belongs to the universal ribosomal protein uL3 family. In terms of assembly, part of the 50S ribosomal subunit. Forms a cluster with proteins L14 and L19.

In terms of biological role, one of the primary rRNA binding proteins, it binds directly near the 3'-end of the 23S rRNA, where it nucleates assembly of the 50S subunit. This chain is Large ribosomal subunit protein uL3, found in Staphylococcus epidermidis (strain ATCC 35984 / DSM 28319 / BCRC 17069 / CCUG 31568 / BM 3577 / RP62A).